Reading from the N-terminus, the 487-residue chain is MSLKIYNTLTGKKEDFAPIKPGEVKIYTCGVTVYDYNHVGHGRSLIVFDMIRRYLRYLGYNVIFVRNFTDVDDKIINRAKNECLPFSVISDKFIKEYFDDAEKFRIEPADIEPRVTTHIPDIINFIQKLVDAGYAYEADGDVYFSVRKFKEYGKLSKRSIDELLAGARIEPGEKKKDPLDFALWKSAKAGEPYWESPWGKGRPGWHTECCAMIFKHLGETIDIHGGGLDLTFPHHENEIAQAEALTGKPFARYWIHNGLVTVNGQKMSKSLGNYIKLKEIYSKYEPDILRLLVLSVHYRSPLDFSWDKMEETKKAYERLKNAIEEAEVLNKLPIDENFEGDLYNAIQKAQSGFYSAMSDDFNTPEALASLFGLVREMNILRDKAIKHGGISKKAIESYKEAAKTLHDIGRDIFGLFDSLQPCIKQEEVKVKEKEESINEDLIQVLIEAREKARKEKQFTIADLIRDKLAEKGIILEDAPFGTKWKKA.

Position 29 (C29) interacts with Zn(2+). A 'HIGH' region motif is present at residues 31–41; it reads VTVYDYNHVGH. Residues C209, H234, and E238 each coordinate Zn(2+). Positions 266–270 match the 'KMSKS' region motif; it reads KMSKS. K269 lines the ATP pocket.

It belongs to the class-I aminoacyl-tRNA synthetase family. In terms of assembly, monomer. The cofactor is Zn(2+).

It localises to the cytoplasm. It catalyses the reaction tRNA(Cys) + L-cysteine + ATP = L-cysteinyl-tRNA(Cys) + AMP + diphosphate. This is Cysteine--tRNA ligase from Sulfurihydrogenibium sp. (strain YO3AOP1).